We begin with the raw amino-acid sequence, 169 residues long: Cell cycle link protein (169 aa).

Residues 9-22 are binding to host SKP1 protein; that stretch reads LPEELREKIVHDHL. The LXCXE motif, interaction with host RBR signature appears at 110–114; it reads LSCRE.

Belongs to the nanovirus Clink protein family. In terms of assembly, interacts with host SKP1. Interacts (via LXCXE domain) with host retinoblastoma-related protein 1 (RBR1). Interacts (via LXCXE domain) with retinoblastoma-related proteins (RBR).

Interacts with and disrupts the function of host retinoblastoma-related proteins RBR, which are key regulators of the cell cycle. Induces transcriptional activation of E2F-regulated S-phase and G2/M-phase-specific genes. Inactivation of the ability of RBR to arrest the cell cycle leads to the stimulation of viral DNA replication. The protein is Cell cycle link protein (DNA-C) of Faba bean necrotic yellows virus (isolate Egyptian EV1-93) (FBNYV).